Consider the following 401-residue polypeptide: Exodeoxyribonuclease 7 large subunit (401 aa).

This sequence belongs to the XseA family. As to quaternary structure, heterooligomer composed of large and small subunits.

It is found in the cytoplasm. It carries out the reaction Exonucleolytic cleavage in either 5'- to 3'- or 3'- to 5'-direction to yield nucleoside 5'-phosphates.. Functionally, bidirectionally degrades single-stranded DNA into large acid-insoluble oligonucleotides, which are then degraded further into small acid-soluble oligonucleotides. The protein is Exodeoxyribonuclease 7 large subunit of Clostridioides difficile (strain 630) (Peptoclostridium difficile).